A 410-amino-acid chain; its full sequence is Probable serine/threonine-protein kinase PBL9 (410 aa).

Residue Gly2 is the site of N-myristoyl glycine attachment. Cys4 is lipidated: S-palmitoyl cysteine. The segment at 11–46 (AESSGASTKYDAKDIGSLGSKASSVSVRPSPRTEGE) is disordered. Positions 68–352 (FRPDSVLGEG…MSEVVSHLEH (285 aa)) constitute a Protein kinase domain. Residues 74 to 82 (LGEGGFGCV) and Lys106 each bind ATP. Position 151 is a phosphotyrosine (Tyr151). Residue Asp203 is the Proton acceptor of the active site. Phosphoserine occurs at positions 207 and 237. 2 positions are modified to phosphothreonine: Thr238 and Thr243. The residue at position 251 (Tyr251) is a Phosphotyrosine.

Belongs to the protein kinase superfamily. Ser/Thr protein kinase family. In terms of assembly, interacts with the Xanthomonas campestris effector XopAC/AvrAC. In terms of tissue distribution, expressed in stomatal guard cells of leaves.

The protein localises to the cell membrane. It carries out the reaction L-seryl-[protein] + ATP = O-phospho-L-seryl-[protein] + ADP + H(+). The catalysed reaction is L-threonyl-[protein] + ATP = O-phospho-L-threonyl-[protein] + ADP + H(+). Its function is as follows. Possible bi-functional kinase. In vitro, it exhibits serine/threonine activity. In vivo, can phosphorylate tyrosine residues of limited substrates. May be involved in plant defense signaling. In Arabidopsis thaliana (Mouse-ear cress), this protein is Probable serine/threonine-protein kinase PBL9.